A 103-amino-acid polypeptide reads, in one-letter code: Small ribosomal subunit protein uS10 (103 aa).

The protein belongs to the universal ribosomal protein uS10 family. In terms of assembly, part of the 30S ribosomal subunit.

Involved in the binding of tRNA to the ribosomes. This Borrelia duttonii (strain Ly) protein is Small ribosomal subunit protein uS10.